The sequence spans 666 residues: Frizzled-3 (666 aa).

A signal peptide spans 1–22 (MAVSWIVFDLWLLTVFLGQIGG). The FZ domain occupies 23-136 (HSLFSCEPIT…CSRFPDCDEP (114 aa)). The Extracellular portion of the chain corresponds to 23-205 (HSLFSCEPIT…REELSFARYF (183 aa)). 5 cysteine pairs are disulfide-bonded: Cys28–Cys89, Cys36–Cys82, Cys73–Cys110, Cys99–Cys133, and Cys103–Cys127. Asn42 is a glycosylation site (N-linked (GlcNAc...) asparagine). Residues 206-226 (IGLISIICLSATLFTFLTFLI) form a helical membrane-spanning segment. Residues 227–237 (DVTRFRYPERP) lie on the Cytoplasmic side of the membrane. Residues 238–258 (IIFYAVCYMMVSLIFFIGFLL) traverse the membrane as a helical segment. The Extracellular portion of the chain corresponds to 259-288 (EDRVACNASSPAQYKASTVTQGSHNKACTM). N-linked (GlcNAc...) asparagine glycosylation occurs at Asn265. Residues 289–309 (LFMVLYFFTMAGSVWWVILTI) traverse the membrane as a helical segment. Residues 310–328 (TWFLAAVPKWGSEAIEKKA) lie on the Cytoplasmic side of the membrane. Residues 329–349 (LLFHASAWGIPGTLTIILLAM) form a helical membrane-spanning segment. The Extracellular segment spans residues 350–374 (NKIEGDNISGVCFVGLYDVDALRYF). Asn356 carries N-linked (GlcNAc...) asparagine glycosylation. Residues 375–395 (VLAPLCLYVVVGVSLLLAGII) form a helical membrane-spanning segment. Residues 396 to 420 (SLNRVRIEIPLEKENQDKLVKFMIR) are Cytoplasmic-facing. A helical membrane pass occupies residues 421–441 (IGVFSILYLVPLLVVIGCYFY). At 442 to 477 (EQAYRGIWETTWIQERCREYHIPCPYQVTQMSRPDL) the chain is on the extracellular side. A helical membrane pass occupies residues 478–498 (ILFLMKYLMALIVGIPSIFWV). The Cytoplasmic portion of the chain corresponds to 499–666 (GSKKTCFEWA…RVIEEDGTSA (168 aa)). A Lys-Thr-X-X-X-Trp motif, mediates interaction with the PDZ domain of Dvl family members motif is present at residues 502 to 507 (KTCFEW). Residues 538-666 (RDPNTPIIRK…RVIEEDGTSA (129 aa)) are disordered. Positions 550 to 565 (GTSTQGTSTHASSTQL) are enriched in polar residues. Residues 617–638 (LTDHSRHSSSHRLNEQSRHSSI) show a composition bias toward basic and acidic residues. The segment covering 639–656 (RDLSNNPMTHITHGTSMN) has biased composition (polar residues).

The protein belongs to the G-protein coupled receptor Fz/Smo family. As to quaternary structure, interacts with VANGL2. In terms of processing, ubiquitinated by ZNRF3, leading to its degradation by the proteasome. In terms of tissue distribution, expressed in the cortex, diencephalon, rostral brainstem and little or no staining is seen in the striatum or cerebellum. Expressed in both hair cells and supporting cells in the utricle, saccule, cristae and the organ of Corti in the inner ear (at protein level). Highly expressed in the CNS. In skin, it is restricted to the epidermis and to the developing hair follicle.

It is found in the membrane. The protein localises to the cell membrane. It localises to the cell surface. The protein resides in the apical cell membrane. Receptor for Wnt proteins. Most of frizzled receptors are coupled to the beta-catenin canonical signaling pathway, which leads to the activation of disheveled proteins, inhibition of GSK-3 kinase, nuclear accumulation of beta-catenin and activation of Wnt target genes. A second signaling pathway involving PKC and calcium fluxes has been seen for some family members, but it is not yet clear if it represents a distinct pathway or if it can be integrated in the canonical pathway, as PKC seems to be required for Wnt-mediated inactivation of GSK-3 kinase. Both pathways seem to involve interactions with G-proteins. Activation by Wnt5A stimulates PKC activity via a G-protein-dependent mechanism. Involved in transduction and intercellular transmission of polarity information during tissue morphogenesis and/or in differentiated tissues. Plays a role in controlling early axon growth and guidance processes necessary for the formation of a subset of central and peripheral major fiber tracts. Required for the development of major fiber tracts in the central nervous system, including: the anterior commissure, the corpus callosum, the thalamocortical, corticothalamic and nigrostriatal tracts, the corticospinal tract, the fasciculus retroflexus, the mammillothalamic tract, the medial lemniscus, and ascending fiber tracts from the spinal cord to the brain. In the peripheral nervous system, controls axon growth in distinct populations of cranial and spinal motor neurons, including the facial branchimotor nerve, the hypoglossal nerve, the phrenic nerve, and motor nerves innervating dorsal limbs. Involved in the migration of cranial neural crest cells. May also be implicated in the transmission of sensory information from the trunk and limbs to the brain. Controls commissural sensory axons guidance after midline crossing along the anterior-posterior axis in the developing spinal cord in a Wnt-dependent signaling pathway. Together with FZD6, is involved in the neural tube closure and plays a role in the regulation of the establishment of planar cell polarity (PCP), particularly in the orientation of asymmetric bundles of stereocilia on the apical faces of a subset of auditory and vestibular sensory cells located in the inner ear. Promotes neurogenesis by maintaining sympathetic neuroblasts within the cell cycle in a beta-catenin-dependent manner. The sequence is that of Frizzled-3 (Fzd3) from Mus musculus (Mouse).